Here is a 309-residue protein sequence, read N- to C-terminus: Porphobilinogen deaminase (309 aa).

S-(dipyrrolylmethanemethyl)cysteine is present on Cys241.

The protein belongs to the HMBS family. In terms of assembly, monomer. It depends on dipyrromethane as a cofactor.

The enzyme catalyses 4 porphobilinogen + H2O = hydroxymethylbilane + 4 NH4(+). Its pathway is porphyrin-containing compound metabolism; protoporphyrin-IX biosynthesis; coproporphyrinogen-III from 5-aminolevulinate: step 2/4. Its function is as follows. Tetrapolymerization of the monopyrrole PBG into the hydroxymethylbilane pre-uroporphyrinogen in several discrete steps. This Bacillus anthracis (strain A0248) protein is Porphobilinogen deaminase.